A 126-amino-acid chain; its full sequence is Large ribosomal subunit protein bL20 (126 aa).

It belongs to the bacterial ribosomal protein bL20 family.

Functionally, binds directly to 23S ribosomal RNA and is necessary for the in vitro assembly process of the 50S ribosomal subunit. It is not involved in the protein synthesizing functions of that subunit. This is Large ribosomal subunit protein bL20 from Buchnera aphidicola subsp. Baizongia pistaciae (strain Bp).